An 864-amino-acid chain; its full sequence is Leucine--tRNA ligase (864 aa).

A 'HIGH' region motif is present at residues 42 to 52; the sequence is PYPSGKLHMGH. A 'KMSKS' region motif is present at residues 624–628; it reads KMSKS. ATP is bound at residue Lys-627.

Belongs to the class-I aminoacyl-tRNA synthetase family.

The protein resides in the cytoplasm. It catalyses the reaction tRNA(Leu) + L-leucine + ATP = L-leucyl-tRNA(Leu) + AMP + diphosphate. In Burkholderia mallei (strain NCTC 10229), this protein is Leucine--tRNA ligase.